Reading from the N-terminus, the 329-residue chain is Beta-ketoacyl-[acyl-carrier-protein] synthase III (329 aa).

Active-site residues include Cys-112 and His-253. The segment at 254–258 is ACP-binding; that stretch reads QANQR. Residue Asn-283 is part of the active site.

The protein belongs to the thiolase-like superfamily. FabH family. In terms of assembly, homodimer.

It is found in the cytoplasm. The catalysed reaction is malonyl-[ACP] + acetyl-CoA + H(+) = 3-oxobutanoyl-[ACP] + CO2 + CoA. It participates in lipid metabolism; fatty acid biosynthesis. Catalyzes the condensation reaction of fatty acid synthesis by the addition to an acyl acceptor of two carbons from malonyl-ACP. Catalyzes the first condensation reaction which initiates fatty acid synthesis and may therefore play a role in governing the total rate of fatty acid production. Possesses both acetoacetyl-ACP synthase and acetyl transacylase activities. Its substrate specificity determines the biosynthesis of branched-chain and/or straight-chain of fatty acids. The polypeptide is Beta-ketoacyl-[acyl-carrier-protein] synthase III (Gloeobacter violaceus (strain ATCC 29082 / PCC 7421)).